The chain runs to 863 residues: DNA mismatch repair protein MutS 2 (863 aa).

Residue 626 to 633 (GPNMSGKS) participates in ATP binding.

This sequence belongs to the DNA mismatch repair MutS family.

In terms of biological role, this protein is involved in the repair of mismatches in DNA. It is possible that it carries out the mismatch recognition step. This protein has a weak ATPase activity. This Halobacterium salinarum (strain ATCC 700922 / JCM 11081 / NRC-1) (Halobacterium halobium) protein is DNA mismatch repair protein MutS 2 (mutS2).